Consider the following 360-residue polypeptide: POU domain, class 5, transcription factor 1 (360 aa).

2 disordered regions span residues 1–50 and 87–118; these read MAGH…IGPG and QGGLETPQPEGEAGAGVESNSEGASPEPCAAP. The 9aaTAD motif lies at 4 to 12; the sequence is HLASDFAFS. Residues 41–50 are compositionally biased toward gly residues; that stretch reads PPGGSGIGPG. Ser111 bears the Phosphoserine; by MAPK mark. A Glycyl lysine isopeptide (Lys-Gly) (interchain with G-Cter in SUMO) cross-link involves residue Lys123. The region spanning 138–212 is the POU-specific domain; the sequence is DIKALQKDLE…LLQKWVEEAD (75 aa). The DNA site is built by Arg157 and Gln164. DNA-binding regions lie at residues 180 to 186 and 193 to 196; these read SQTTICR and SFKN. A DNA-binding region (homeobox) is located at residues 230–289; sequence RKRKRTSIENRVRGNLESMFLQCPKPTLQQISHIAQQLGLEKDVVRVWFCNRRQKGKRSS. Thr235 carries the post-translational modification Phosphothreonine. Residues Ser236, Ser289, and Ser290 each carry the phosphoserine modification. The segment at 287–316 is disordered; sequence RSSSDYSQREDFEAAGSPFPGGPVSFPLAP. Low complexity predominate over residues 302-313; that stretch reads GSPFPGGPVSFP. At Ser355 the chain carries Phosphoserine.

It belongs to the POU transcription factor family. Class-5 subfamily. In terms of assembly, interacts with PKM. Interacts with WWP2. Interacts with UBE2I and ZSCAN10. Interacts with PCGF1. Interacts with ESRRB; recruits ESRRB near the POU5F1-SOX2 element in the NANOG proximal promoter; the interaction is DNA independent. Interacts with ZNF322. Interacts with MAPK8 and MAPK9; the interaction allows MAPK8 and MAPK9 to phosphorylate POU5F1 on Ser-355. Interacts (when phosphorylated on Ser-355) with FBXW8. Interacts with FBXW4. Interacts with SOX2 and SOX15; binds synergistically with either SOX2 or SOX15 to DNA. Interacts with DDX56. In terms of processing, sumoylation enhances the protein stability, DNA binding and transactivation activity. Sumoylation is required for enhanced YES1 expression. Post-translationally, ubiquitinated; undergoes 'Lys-63'-linked polyubiquitination by WWP2 leading to proteasomal degradation. ERK1/2-mediated phosphorylation at Ser-111 promotes nuclear exclusion and proteasomal degradation. Phosphorylation at Thr-235 and Ser-236 decrease DNA-binding and alters ability to activate transcription.

The protein localises to the cytoplasm. It is found in the nucleus. Functionally, transcription factor that binds to the octamer motif (5'-ATTTGCAT-3'). Forms a trimeric complex with SOX2 or SOX15 on DNA and controls the expression of a number of genes involved in embryonic development such as YES1, FGF4, UTF1 and ZFP206. Critical for early embryogenesis and for embryonic stem cell pluripotency. The chain is POU domain, class 5, transcription factor 1 (POU5F1) from Sus scrofa (Pig).